The sequence spans 715 residues: ATP-dependent zinc metalloprotease YME1L1 (715 aa).

A disordered region spans residues 31–54 (VSVNTSASPKQHRDTVAEHEAPSS). The segment covering 41–52 (QHRDTVAEHEAP) has biased composition (basic and acidic residues). A helical transmembrane segment spans residues 238–258 (ILFVLLLFGIYGLLKNPFLSV). The ATP site is built by Val-283, Thr-325, Gly-326, Lys-327, Thr-328, and Leu-329. Zn(2+) is bound at residue His-541. Glu-542 is a catalytic residue. Zn(2+) contacts are provided by His-545 and Asp-619.

In the N-terminal section; belongs to the AAA ATPase family. The protein in the C-terminal section; belongs to the peptidase M41 family. In terms of assembly, homohexamer; may also form heterohexamers. Exists in several complexes of 600-1100 kDa. Interacts with AFG1L. It depends on Zn(2+) as a cofactor. In terms of processing, proteolytically processed by mitochondrial processing peptidase (MPP) to generate the mature form. Degraded in an OMA1-dependent manner in response to oxidative stress.

The protein resides in the mitochondrion inner membrane. The protein localises to the mitochondrion. The enzyme catalyses ATP + H2O = ADP + phosphate + H(+). Functionally, ATP-dependent metalloprotease that catalyzes the degradation of folded and unfolded proteins with a suitable degron sequence in the mitochondrial intermembrane region. Plays an important role in regulating mitochondrial morphology and function by cleaving OPA1 at position S2, giving rise to a form of OPA1 that promotes maintenance of normal mitochondrial structure and mitochondrial protein metabolism. Ensures cell proliferation, maintains normal cristae morphology and complex I respiration activity, promotes antiapoptotic activity and protects mitochondria from the accumulation of oxidatively damaged membrane proteins. Required to control the accumulation of nonassembled respiratory chain subunits (NDUFB6, OX4 and ND1). Involved in the mitochondrial adaptation in response to various signals, such as stress or developmental cues, by mediating degradation of mitochondrial proteins to rewire the mitochondrial proteome. Catalyzes degradation of mitochondrial proteins, such as translocases, lipid transfer proteins and metabolic enzymes in response to nutrient starvation in order to limit mitochondrial biogenesis: mechanistically, YME1L is activated by decreased phosphatidylethanolamine levels caused by LPIN1 activity in response to mTORC1 inhibition. Acts as a regulator of adult neural stem cell self-renewal by promoting mitochondrial proteome rewiring, preserving neural stem and progenitor cells self-renewal. Required for normal, constitutive degradation of PRELID1. Catalyzes the degradation of OMA1 in response to membrane depolarization. Mediates degradation of TIMM17A downstream of the integrated stress response (ISR). Catalyzes degradation of MICU1 when MICU1 is not assembled via an interchain disulfide. The polypeptide is ATP-dependent zinc metalloprotease YME1L1 (Yme1l1) (Rattus norvegicus (Rat)).